The sequence spans 131 residues: Large ribosomal subunit protein bL17 (131 aa).

This sequence belongs to the bacterial ribosomal protein bL17 family. Part of the 50S ribosomal subunit. Contacts protein L32.

The sequence is that of Large ribosomal subunit protein bL17 from Oenococcus oeni (strain ATCC BAA-331 / PSU-1).